Here is a 437-residue protein sequence, read N- to C-terminus: Methylenetetrahydrofolate--tRNA-(uracil-5-)-methyltransferase TrmFO (437 aa).

10–15 serves as a coordination point for FAD; the sequence is GGGLAG.

Belongs to the MnmG family. TrmFO subfamily. The cofactor is FAD.

The protein localises to the cytoplasm. The catalysed reaction is uridine(54) in tRNA + (6R)-5,10-methylene-5,6,7,8-tetrahydrofolate + NADH + H(+) = 5-methyluridine(54) in tRNA + (6S)-5,6,7,8-tetrahydrofolate + NAD(+). The enzyme catalyses uridine(54) in tRNA + (6R)-5,10-methylene-5,6,7,8-tetrahydrofolate + NADPH + H(+) = 5-methyluridine(54) in tRNA + (6S)-5,6,7,8-tetrahydrofolate + NADP(+). Catalyzes the folate-dependent formation of 5-methyl-uridine at position 54 (M-5-U54) in all tRNAs. In Geotalea daltonii (strain DSM 22248 / JCM 15807 / FRC-32) (Geobacter daltonii), this protein is Methylenetetrahydrofolate--tRNA-(uracil-5-)-methyltransferase TrmFO.